A 230-amino-acid polypeptide reads, in one-letter code: Cytidylate kinase (230 aa).

Position 11–19 (11–19 (GPAAAGKST)) interacts with ATP.

Belongs to the cytidylate kinase family. Type 1 subfamily.

Its subcellular location is the cytoplasm. It catalyses the reaction CMP + ATP = CDP + ADP. The enzyme catalyses dCMP + ATP = dCDP + ADP. The protein is Cytidylate kinase of Oceanobacillus iheyensis (strain DSM 14371 / CIP 107618 / JCM 11309 / KCTC 3954 / HTE831).